Consider the following 581-residue polypeptide: MDIIKGNLDGISKPASNSRIRPGSRSSNASLEVLSTEPGSFKVDTASNLNSGKEDHSESSNTENRRTSNDDKQESCSEKIKLAEEGSDEDLDLVQHQIISECSDEPKLKELDSQLQDAIQKMKKLDKILAKKQRREKEIKKQGLEMRIKLWEEIKSAKYSEAWQSKEEMENTKKFLSLTAVSEETVGPSHEEEDTFSSVFHTQIPPEEYEMQMQKLNKDFTCDVERNESLIKSGKKPFSNTEKIELRGKHNQDFIKRNIELAKESRNPVVMVDREKKRLVELLKDLDEKDSGLSSSEGDQSGWVVPVKGYELAVTQHQQLAEIDIKLQELSAASPTISSFSPRLENRNNQKPDRDGERNMEVTPGEKILRNTKEQRDLHNRLREIDEKLKMMKENVLESTSCLSEEQLKCLLDECILKQKSIIKLSSERKKEDIEDVTPVFPQLSRSIISKLLNESETKVQKTEVEDADMLESEECEASKGYYLTKALTGHNMSEALVTEAENMKCLQFSKDVIISDTKDYFMSKTLGIGRLKRPSFLDDPLYGISVSLSSEDQHLKLSSPENTIADEQETKDAAEECKEP.

Residues 1–77 (MDIIKGNLDG…SNDDKQESCS (77 aa)) are disordered. The span at 14-30 (PASNSRIRPGSRSSNAS) shows a compositional bias: polar residues. Positions 52-77 (GKEDHSESSNTENRRTSNDDKQESCS) are enriched in basic and acidic residues. A Phosphoserine modification is found at Ser-87. Positions 105–153 (EPKLKELDSQLQDAIQKMKKLDKILAKKQRREKEIKKQGLEMRIKLWEE) form a coiled coil. Disordered regions lie at residues 338-365 (SSFS…VTPG) and 555-581 (HLKL…CKEP). Basic and acidic residues-rich tracts occupy residues 344–360 (LENR…ERNM) and 569–581 (QETK…CKEP).

This sequence belongs to the FSIP1 family.

This Homo sapiens (Human) protein is Fibrous sheath-interacting protein 1 (FSIP1).